Consider the following 232-residue polypeptide: Peroxiredoxin (232 aa).

Residues 6–161 (PSIGEKFPEI…ILRLIESLQI (156 aa)) enclose the Thioredoxin domain. Residue Cys-48 is the Cysteine sulfenic acid (-SOH) intermediate of the active site. Arg-124 is a substrate binding site. A disulfide bridge connects residues Cys-203 and Cys-209.

It belongs to the peroxiredoxin family. Prx6 subfamily. In terms of assembly, homodecamer. Pentamer of dimers that assemble into a ring structure.

The protein resides in the cytoplasm. The catalysed reaction is a hydroperoxide + [thioredoxin]-dithiol = an alcohol + [thioredoxin]-disulfide + H2O. In terms of biological role, thiol-specific peroxidase that catalyzes the reduction of hydrogen peroxide and organic hydroperoxides to water and alcohols, respectively. Plays a role in cell protection against oxidative stress by detoxifying peroxides. The sequence is that of Peroxiredoxin from Hyperthermus butylicus (strain DSM 5456 / JCM 9403 / PLM1-5).